A 343-amino-acid chain; its full sequence is Probable potassium channel protein 2 (343 aa).

At methionine 1–leucine 7 the chain is on the cytoplasmic side. The helical transmembrane segment at valine 8–isoleucine 28 threads the bilayer. At glutamate 29 to threonine 61 the chain is on the extracellular side. The Selectivity filter signature appears at threonine 46–aspartate 51. Residues leucine 62 to alanine 82 form a helical membrane-spanning segment. Residues glutamate 83–leucine 343 are Cytoplasmic-facing. Positions lysine 107–serine 227 constitute an RCK N-terminal domain. The RCK C-terminal domain occupies isoleucine 253 to lysine 338.

The protein resides in the cell membrane. Functionally, probable potassium channel protein. The sequence is that of Probable potassium channel protein 2 from Methanocaldococcus jannaschii (strain ATCC 43067 / DSM 2661 / JAL-1 / JCM 10045 / NBRC 100440) (Methanococcus jannaschii).